The primary structure comprises 163 residues: Allophycocyanin alpha-B chain (163 aa).

N71 carries the post-translational modification N4-methylasparagine. C81 is a binding site for (2R,3E)-phycocyanobilin.

This sequence belongs to the phycobiliprotein family. In terms of assembly, heterodimer of an alpha and a beta chain. Post-translationally, contains one covalently linked bilin chromophore.

The protein localises to the cellular thylakoid membrane. Its function is as follows. Light-harvesting photosynthetic bile pigment-protein from the phycobiliprotein complex. Allophycocyanin has a maximum absorption at approximately 650 nanometers. The chain is Allophycocyanin alpha-B chain from Synechococcus sp. (strain ATCC 27144 / PCC 6301 / SAUG 1402/1) (Anacystis nidulans).